A 292-amino-acid chain; its full sequence is 4-hydroxy-tetrahydrodipicolinate synthase (292 aa).

Thr45 contributes to the pyruvate binding site. Tyr133 acts as the Proton donor/acceptor in catalysis. The active-site Schiff-base intermediate with substrate is Lys161. Ile203 is a pyruvate binding site.

Belongs to the DapA family. Homotetramer; dimer of dimers.

It localises to the cytoplasm. It carries out the reaction L-aspartate 4-semialdehyde + pyruvate = (2S,4S)-4-hydroxy-2,3,4,5-tetrahydrodipicolinate + H2O + H(+). The protein operates within amino-acid biosynthesis; L-lysine biosynthesis via DAP pathway; (S)-tetrahydrodipicolinate from L-aspartate: step 3/4. Catalyzes the condensation of (S)-aspartate-beta-semialdehyde [(S)-ASA] and pyruvate to 4-hydroxy-tetrahydrodipicolinate (HTPA). The protein is 4-hydroxy-tetrahydrodipicolinate synthase of Nitrosococcus oceani (strain ATCC 19707 / BCRC 17464 / JCM 30415 / NCIMB 11848 / C-107).